The sequence spans 322 residues: Tetraacyldisaccharide 4'-kinase (322 aa).

54–61 (SVGGTGKT) is an ATP binding site.

This sequence belongs to the LpxK family.

The enzyme catalyses a lipid A disaccharide + ATP = a lipid IVA + ADP + H(+). It participates in glycolipid biosynthesis; lipid IV(A) biosynthesis; lipid IV(A) from (3R)-3-hydroxytetradecanoyl-[acyl-carrier-protein] and UDP-N-acetyl-alpha-D-glucosamine: step 6/6. Functionally, transfers the gamma-phosphate of ATP to the 4'-position of a tetraacyldisaccharide 1-phosphate intermediate (termed DS-1-P) to form tetraacyldisaccharide 1,4'-bis-phosphate (lipid IVA). This is Tetraacyldisaccharide 4'-kinase from Francisella philomiragia subsp. philomiragia (strain ATCC 25017 / CCUG 19701 / FSC 153 / O#319-036).